Reading from the N-terminus, the 852-residue chain is Leucine--tRNA ligase (852 aa).

A 'HIGH' region motif is present at residues 41–51; that stretch reads PYPSGRIHIGH. Residues 623 to 627 carry the 'KMSKS' region motif; the sequence is KMSKS. Position 626 (Lys-626) interacts with ATP.

It belongs to the class-I aminoacyl-tRNA synthetase family.

Its subcellular location is the cytoplasm. It catalyses the reaction tRNA(Leu) + L-leucine + ATP = L-leucyl-tRNA(Leu) + AMP + diphosphate. The protein is Leucine--tRNA ligase of Ruegeria pomeroyi (strain ATCC 700808 / DSM 15171 / DSS-3) (Silicibacter pomeroyi).